The primary structure comprises 278 residues: MSAPGSPDQAYDFLLKFLLVGDRDVGKSEILESLQDGTAESPYSHLGGIDYKTTTILLDGQRVKLKLWDTSGQGRFCTIFRSYSRGAQGVILVYDIANRWSFEGMDRWIKKIEEHAPGVPKILVGNRLHLAFKRQVPREQAQAYAERLGVTFFEVSPLCNFNIIESFTELARIVLLRHRLNWLGRPSKVLSLQDLCCRTIVSCTPVHLVDKLPLPIALRSHLKSFSMAKGLNARMMRGLSYSLTTSSTHKRSSLCKVKIVCPPQSPPKNCTRNSCKIS.

Positions 26, 27, and 28 each coordinate GTP. Position 28 (S28) interacts with Mg(2+). The tract at residues 41 to 49 (SPYSHLGGI) is switch-I. D69 contacts Mg(2+). Positions 72, 126, and 127 each coordinate GTP. Residues 72–88 (GQGRFCTIFRSYSRGAQ) are switch-II. Positions 175–228 (LLRHRLNWLGRPSKVLSLQDLCCRTIVSCTPVHLVDKLPLPIALRSHLKSFSMA) constitute an SOCS box domain. The S-palmitoyl cysteine moiety is linked to residue C270. C275 carries the S-geranylgeranyl cysteine lipid modification.

The protein belongs to the small GTPase superfamily. Rab family. Mg(2+) is required as a cofactor. In terms of tissue distribution, expressed in brain, lung, heart, skeletal muscle, kidney and liver. Highest expression in brain. Expressed in fetal brain and kidney.

It localises to the membrane. It is found in the cytoplasm. The protein resides in the mitochondrion. It carries out the reaction GTP + H2O = GDP + phosphate + H(+). The protein operates within protein modification; protein ubiquitination. Regulated by guanine nucleotide exchange factors (GEFs) which promote the exchange of bound GDP for free GTP. Regulated by GTPase activating proteins (GAPs) which increase the GTP hydrolysis activity. Inhibited by GDP dissociation inhibitors (GDIs). Functionally, may act as substrate-recognition component of the ECS(RAB40) E3 ubiquitin ligase complex which mediates the ubiquitination and subsequent proteasomal degradation of target proteins. The Rab40 subfamily belongs to the Rab family that are key regulators of intracellular membrane trafficking, from the formation of transport vesicles to their fusion with membranes. Rabs cycle between an inactive GDP-bound form and an active GTP-bound form that is able to recruit to membranes different sets of downstream effectors directly responsible for vesicle formation, movement, tethering and fusion. In Homo sapiens (Human), this protein is Ras-related protein Rab-40A-like.